The following is a 134-amino-acid chain: 6,7-dimethyl-8-ribityllumazine synthase (134 aa).

5-amino-6-(D-ribitylamino)uracil contacts are provided by residues Phe-12, 44–46 (VFD), and 68–70 (SVI). Residue 73–74 (ET) coordinates (2S)-2-hydroxy-3-oxobutyl phosphate. Catalysis depends on His-76, which acts as the Proton donor. Leu-101 contacts 5-amino-6-(D-ribitylamino)uracil. Arg-116 is a binding site for (2S)-2-hydroxy-3-oxobutyl phosphate.

It belongs to the DMRL synthase family.

The catalysed reaction is (2S)-2-hydroxy-3-oxobutyl phosphate + 5-amino-6-(D-ribitylamino)uracil = 6,7-dimethyl-8-(1-D-ribityl)lumazine + phosphate + 2 H2O + H(+). It participates in cofactor biosynthesis; riboflavin biosynthesis; riboflavin from 2-hydroxy-3-oxobutyl phosphate and 5-amino-6-(D-ribitylamino)uracil: step 1/2. Functionally, catalyzes the formation of 6,7-dimethyl-8-ribityllumazine by condensation of 5-amino-6-(D-ribitylamino)uracil with 3,4-dihydroxy-2-butanone 4-phosphate. This is the penultimate step in the biosynthesis of riboflavin. This is 6,7-dimethyl-8-ribityllumazine synthase from Methanosarcina mazei (strain ATCC BAA-159 / DSM 3647 / Goe1 / Go1 / JCM 11833 / OCM 88) (Methanosarcina frisia).